The chain runs to 228 residues: Ribose-5-phosphate isomerase A (228 aa).

Substrate contacts are provided by residues 27–30 (TGTT), 86–89 (DGAD), and 100–103 (KGMG). E109 functions as the Proton acceptor in the catalytic mechanism. Substrate is bound at residue K127.

This sequence belongs to the ribose 5-phosphate isomerase family. As to quaternary structure, homodimer.

It catalyses the reaction aldehydo-D-ribose 5-phosphate = D-ribulose 5-phosphate. The protein operates within carbohydrate degradation; pentose phosphate pathway; D-ribose 5-phosphate from D-ribulose 5-phosphate (non-oxidative stage): step 1/1. Functionally, catalyzes the reversible conversion of ribose-5-phosphate to ribulose 5-phosphate. This Borreliella afzelii (strain PKo) (Borrelia afzelii) protein is Ribose-5-phosphate isomerase A.